We begin with the raw amino-acid sequence, 372 residues long: Protein phosphatase Mn(2+)-dependent 1K (372 aa).

The N-terminal 29 residues, 1–29 (MLSAAFITLLRSGGNQVKKRVLLSSILLQ), are a transit peptide targeting the mitochondrion. The tract at residues 46-61 (RCSRFDPDGSGQPATW) is critical for association with the BCKDH complex. Positions 94 to 346 (NVGCASLIGK…DNSTAVVVPF (253 aa)) constitute a PPM-type phosphatase domain. Mn(2+) is bound by residues Asp127 and Gly128. Phosphoserine is present on Ser248. Positions 298 and 337 each coordinate Mn(2+).

It belongs to the PP2C family. As to quaternary structure, monomer. Interacts with E1 and E2 components of the branched-chain alpha-ketoacid dehydrogenase (BCKDH) complex; this interaction requires colocalization in mitochondria. Interacts with BCKDHA but not with BCKDHB of the E1 component. Interacts with the 24-meric E2 core composed of DBT monomers with a 24:1 stoichiometry; the N-terminal region (residues 49-61) of PPM1K and C-terminal linker of the lipoyl domain of DBT (residues 145-160) are critical for this interaction, whereas the lipoyl prosthetic group is dispensable. Competes with BCKDK for binding to the E2 core; this interaction is modulated by branched-chain alpha-keto acids. At steady state, BCKDH holoenzyme preferentially binds BCKDK and BCKDHA is phosphorylated. In response to high levels of branched-chain alpha-keto acids, the inhibitory BCKDK is replaced by activating PPM1K leading to BCKDHA dephosphorylation and BCAA degradation. Mn(2+) is required as a cofactor. In terms of tissue distribution, highly expressed in the heart, kidney, brain and liver and to a lesser extent in testis, lung, spleen and adipose tissue. Very low amount in muscle (at protein level). Also expressed in the thymus (at protein level) and the diaphragm. Significantly reduced in hypertrophied hearts.

Its subcellular location is the mitochondrion matrix. The enzyme catalyses O-phospho-L-seryl-[3-methyl-2-oxobutanoate dehydrogenase] + H2O = L-seryl-[3-methyl-2-oxobutanoate dehydrogenase] + phosphate. It catalyses the reaction O-phospho-L-seryl-[protein] + H2O = L-seryl-[protein] + phosphate. It participates in protein modification. Its function is as follows. Serine/threonine-protein phosphatase component of macronutrients metabolism. Forms a functional kinase and phosphatase pair with BCKDK, serving as a metabolic regulatory node that coordinates branched-chain amino acids (BCAAs) with glucose and lipid metabolism via two distinct phosphoprotein targets: mitochondrial BCKDHA subunit of the branched-chain alpha-ketoacid dehydrogenase (BCKDH) complex and cytosolic ACLY, a lipogenic enzyme of Krebs cycle. At high levels of branched-chain ketoacids, dephosphorylates and activates mitochondrial BCKDH complex, a multisubunit complex consisting of three multimeric components each involved in different steps of BCAA catabolism: E1 composed of BCKDHA and BCKDHB, E2 core composed of DBT monomers, and E3 composed of DLD monomers. Tightly associates with the E2 component of BCKDH complex and dephosphorylates BCKDHA on Ser-334. Regulates the reversible phosphorylation of ACLY in response to changes in cellular carbohydrate abundance such as occurs during fasting to feeding metabolic transition. At fasting state, appears to dephosphorylate ACLY on Ser-455 and inactivate it. Refeeding stimulates MLXIPL/ChREBP transcription factor, leading to increased BCKDK to PPM1K expression ratio, phosphorylation and activation of ACLY that ultimately results in the generation of malonyl-CoA and oxaloacetate immediate substrates of de novo lipogenesis and gluconeogenesis, respectively. Recognizes phosphosites having SxS or RxxS motifs and strictly depends on Mn(2+) ions for the phosphatase activity. Regulates Ca(2+)-induced opening of mitochondrial transition pore and apoptotic cell death. This is Protein phosphatase Mn(2+)-dependent 1K from Mus musculus (Mouse).